Reading from the N-terminus, the 87-residue chain is Small ribosomal subunit protein bS20 (87 aa).

Belongs to the bacterial ribosomal protein bS20 family.

Its function is as follows. Binds directly to 16S ribosomal RNA. The protein is Small ribosomal subunit protein bS20 of Neorickettsia sennetsu (strain ATCC VR-367 / Miyayama) (Ehrlichia sennetsu).